Here is a 292-residue protein sequence, read N- to C-terminus: CCR4-NOT transcription complex subunit 8 (292 aa).

A divalent metal cation is bound by residues Asp-40, Glu-42, Asp-161, and Asp-230.

The protein belongs to the CAF1 family. As to quaternary structure, component of the CCR4-NOT complex; distinct complexes seem to exist that differ in the participation of probably mutually exclusive catalytic subunits; the complex contains two deadenylase subunits, CNOT6 or CNOT6L, and CNOT7 or CNOT8. In the complex interacts directly with CNOT1. Interacts with BTG1, BTG2 and TOB1. Interacts with BTG4.

The protein localises to the cytoplasm. Its subcellular location is the nucleus. The catalysed reaction is Exonucleolytic cleavage of poly(A) to 5'-AMP.. Functionally, has 3'-5' poly(A) exoribonuclease activity for synthetic poly(A) RNA substrate. Its function seems to be partially redundant with that of CNOT7. Catalytic component of the CCR4-NOT complex which is linked to various cellular processes including bulk mRNA degradation, miRNA-mediated repression, translational repression during translational initiation and general transcription regulation. During miRNA-mediated repression the complex also seems to act as translational repressor during translational initiation. Additional complex functions may be a consequence of its influence on mRNA expression. Associates with members of the BTG family such as TOB1 and BTG2 and is required for their anti-proliferative activity. The protein is CCR4-NOT transcription complex subunit 8 (CNOT8) of Homo sapiens (Human).